The following is a 926-amino-acid chain: Lipoxygenase 4, chloroplastic (926 aa).

A chloroplast-targeting transit peptide spans M1–V58. The PLAT domain maps to F106 to T228. The 696-residue stretch at P231–I926 folds into the Lipoxygenase domain. Residues H585, H590, H777, N781, and I926 each coordinate Fe cation.

It belongs to the lipoxygenase family. Fe cation serves as cofactor. Expressed in leaves.

Its subcellular location is the plastid. It localises to the chloroplast. It carries out the reaction (9Z,12Z)-octadecadienoate + O2 = (13S)-hydroperoxy-(9Z,11E)-octadecadienoate. It catalyses the reaction (9Z,12Z,15Z)-octadecatrienoate + O2 = (13S)-hydroperoxy-(9Z,11E,15Z)-octadecatrienoate. Its pathway is lipid metabolism; oxylipin biosynthesis. In terms of biological role, plant lipoxygenases may be involved in a number of diverse aspects of plant physiology including growth and development, pest resistance, and senescence or responses to wounding. Catalyzes the hydroperoxidation of lipids containing a cis,cis-1,4-pentadiene structure. 13S-lipoxygenase that can use linolenic acid as substrates. This Arabidopsis thaliana (Mouse-ear cress) protein is Lipoxygenase 4, chloroplastic (LOX4).